The primary structure comprises 196 residues: Nucleoside triphosphate pyrophosphatase (196 aa).

Asp73 (proton acceptor) is an active-site residue.

This sequence belongs to the Maf family. The cofactor is a divalent metal cation.

It is found in the cytoplasm. The enzyme catalyses a ribonucleoside 5'-triphosphate + H2O = a ribonucleoside 5'-phosphate + diphosphate + H(+). The catalysed reaction is a 2'-deoxyribonucleoside 5'-triphosphate + H2O = a 2'-deoxyribonucleoside 5'-phosphate + diphosphate + H(+). Nucleoside triphosphate pyrophosphatase. May have a dual role in cell division arrest and in preventing the incorporation of modified nucleotides into cellular nucleic acids. This chain is Nucleoside triphosphate pyrophosphatase, found in Chlamydia pneumoniae (Chlamydophila pneumoniae).